The following is a 243-amino-acid chain: UPF0758 protein PCC7424_2073 (243 aa).

The MPN domain occupies 112-235 (VEINDPVSAV…HQSLRTVTDL (124 aa)). 3 residues coordinate Zn(2+): H184, H186, and D197. Residues 184–197 (HNHPSGNVAPSQED) carry the JAMM motif motif.

Belongs to the UPF0758 family.

In Gloeothece citriformis (strain PCC 7424) (Cyanothece sp. (strain PCC 7424)), this protein is UPF0758 protein PCC7424_2073.